We begin with the raw amino-acid sequence, 84 residues long: Putative glutaredoxin MT3292 (84 aa).

A Glutaredoxin domain is found at Met1–Gly84.

The polypeptide is Putative glutaredoxin MT3292 (Mycobacterium tuberculosis (strain CDC 1551 / Oshkosh)).